Here is a 743-residue protein sequence, read N- to C-terminus: 1,4-alpha-glucan branching enzyme GlgB (743 aa).

Catalysis depends on Asp-423, which acts as the Nucleophile. The active-site Proton donor is the Glu-476.

This sequence belongs to the glycosyl hydrolase 13 family. GlgB subfamily. In terms of assembly, monomer.

It carries out the reaction Transfers a segment of a (1-&gt;4)-alpha-D-glucan chain to a primary hydroxy group in a similar glucan chain.. Its pathway is glycan biosynthesis; glycogen biosynthesis. Functionally, catalyzes the formation of the alpha-1,6-glucosidic linkages in glycogen by scission of a 1,4-alpha-linked oligosaccharide from growing alpha-1,4-glucan chains and the subsequent attachment of the oligosaccharide to the alpha-1,6 position. The sequence is that of 1,4-alpha-glucan branching enzyme GlgB from Pseudomonas fluorescens (strain Pf0-1).